A 217-amino-acid polypeptide reads, in one-letter code: Cytochrome c biogenesis ATP-binding export protein CcmA (217 aa).

Residues 16–214 (LVLEQLSCER…AHGQAEVTEG (199 aa)) form the ABC transporter domain. 48-55 (GANGAGKT) lines the ATP pocket.

The protein belongs to the ABC transporter superfamily. CcmA exporter (TC 3.A.1.107) family. In terms of assembly, the complex is composed of two ATP-binding proteins (CcmA) and two transmembrane proteins (CcmB).

It is found in the cell inner membrane. The enzyme catalyses heme b(in) + ATP + H2O = heme b(out) + ADP + phosphate + H(+). Part of the ABC transporter complex CcmAB involved in the biogenesis of c-type cytochromes; once thought to export heme, this seems not to be the case, but its exact role is uncertain. Responsible for energy coupling to the transport system. This Alcanivorax borkumensis (strain ATCC 700651 / DSM 11573 / NCIMB 13689 / SK2) protein is Cytochrome c biogenesis ATP-binding export protein CcmA.